The primary structure comprises 360 residues: Bifunctional protein FolD 4, chloroplastic (360 aa).

The transit peptide at 1–51 (MASMMFTDCSSTTTSRLIHLNRSSGTFLLRQCVGQLRLQTTASGRGCCIRS) directs the protein to the chloroplast. S52 carries the N-acetylserine modification.

The protein belongs to the tetrahydrofolate dehydrogenase/cyclohydrolase family. As to quaternary structure, homodimer.

Its subcellular location is the plastid. It is found in the chloroplast. It carries out the reaction (6R)-5,10-methylene-5,6,7,8-tetrahydrofolate + NADP(+) = (6R)-5,10-methenyltetrahydrofolate + NADPH. The enzyme catalyses (6R)-5,10-methenyltetrahydrofolate + H2O = (6R)-10-formyltetrahydrofolate + H(+). The protein operates within one-carbon metabolism; tetrahydrofolate interconversion. Its function is as follows. Catalyzes the oxidation of 5,10-methylenetetrahydrofolate to 5,10-methenyltetrahydrofolate and then the hydrolysis of 5,10-methenyltetrahydrofolate to 10-formyltetrahydrofolate. The polypeptide is Bifunctional protein FolD 4, chloroplastic (FOLD4) (Arabidopsis thaliana (Mouse-ear cress)).